The primary structure comprises 314 residues: Pantothenate synthetase (314 aa).

43-50 (MGALHEGH) serves as a coordination point for ATP. His50 serves as the catalytic Proton donor. Gln75 contributes to the (R)-pantoate binding site. Position 75 (Gln75) interacts with beta-alanine. Residues 112–131 (MYPDGTRTSVHPGPLGDDLE) form a disordered region. 161-164 (GEKD) serves as a coordination point for ATP. A (R)-pantoate-binding site is contributed by Gln167. ATP-binding positions include Val190 and 198–201 (LSSR).

It belongs to the pantothenate synthetase family. As to quaternary structure, homodimer.

Its subcellular location is the cytoplasm. The enzyme catalyses (R)-pantoate + beta-alanine + ATP = (R)-pantothenate + AMP + diphosphate + H(+). The protein operates within cofactor biosynthesis; (R)-pantothenate biosynthesis; (R)-pantothenate from (R)-pantoate and beta-alanine: step 1/1. Its function is as follows. Catalyzes the condensation of pantoate with beta-alanine in an ATP-dependent reaction via a pantoyl-adenylate intermediate. The chain is Pantothenate synthetase from Mycolicibacterium smegmatis (strain ATCC 700084 / mc(2)155) (Mycobacterium smegmatis).